The chain runs to 622 residues: Sodium-coupled monocarboxylate transporter 1 (622 aa).

Over 1 to 15 (MVTPGNIGSFTVWDY) the chain is Extracellular. A helical transmembrane segment spans residues 16-36 (LVFALMLLISAVIGIYYAFAG). At 37–51 (GGQKTSKDFLMGGRS) the chain is on the cytoplasmic side. Residues 52 to 72 (MTAVPVALSLTASFMSAVTVL) traverse the membrane as a helical segment. Topologically, residues 73-83 (GTPAEVYRFGA) are extracellular. Residues 84–104 (MFIIFAFSYTIVVIISSEVFL) form a helical membrane-spanning segment. Residues 105-128 (PVFYRLGITSTYEYLELRFNKFVR) are Cytoplasmic-facing. The helical transmembrane segment at 129–149 (LLGTILFIIQTVLYTGIVIYA) threads the bilayer. The Extracellular portion of the chain corresponds to 150 to 161 (PALALNQVTGFD). The helical transmembrane segment at 162–182 (LWGAVVATGVVCTFYCTMGGL) threads the bilayer. Residues 183-184 (KA) are Cytoplasmic-facing. The helical transmembrane segment at 185–205 (VVWTDVFQVGIMVAGFTSVII) threads the bilayer. At 206–241 (RAVVVQGGIGPILNDSYYGDRLNFWDFDPNPLKRHT) the chain is on the extracellular side. Asparagine 219 is a glycosylation site (N-linked (GlcNAc...) asparagine). A helical transmembrane segment spans residues 242–262 (FWTIVVGGTFTWTGIYGVNQA). Over 263 to 283 (QVQRYIACKTRFQAKMSLYVN) the chain is Cytoplasmic. The helical transmembrane segment at 284–304 (LIGLWAILACAVLSGLAMYSI) threads the bilayer. Residues 305–336 (YKDCDPWTAKFVSAPDQLMPYLALDILRDYPG) lie on the Extracellular side of the membrane. The helical transmembrane segment at 337 to 357 (LPGLFVSCAYSGTLSTVSSSI) threads the bilayer. Topologically, residues 358-389 (NALAAVTVEDLIKPYIRSLSEKKMSWISKGTS) are cytoplasmic. Residues 390-410 (LLYGAICIGMAGIASLMGGLL) traverse the membrane as a helical segment. Over 411–415 (QAALS) the chain is Extracellular. The chain crosses the membrane as a helical span at residues 416–436 (IFGMVGGPLLGLFSLGILFPF). Residues 437–438 (VN) are Cytoplasmic-facing. Residues 439 to 459 (SLGAVIGLLSGFAISLWVGIG) form a helical membrane-spanning segment. Residues 460 to 521 (SQIYAPSPSS…LADSWYSLSY (62 aa)) lie on the Extracellular side of the membrane. Residues asparagine 481 and asparagine 488 are each glycosylated (N-linked (GlcNAc...) asparagine). Residues 522 to 542 (LYFSTIGTIVAVLVGVIVSLL) traverse the membrane as a helical segment. Residues 543-622 (SGGLKQNVNR…KGEKTNGITA (80 aa)) lie on the Cytoplasmic side of the membrane. The segment at 591 to 622 (DNDMEQGTDNPAFNNMEMTSTEKGEKTNGITA) is disordered. Positions 595–609 (EQGTDNPAFNNMEMT) are enriched in polar residues.

It belongs to the sodium:solute symporter (SSF) (TC 2.A.21) family. As to expression, in the gastrula and neurula stages, expressed in the gastrula anterior endoderm and in the entire circumference of the blastopore lip superficial endoderm. At tailbud stages, abundant expression observed in the ventral midgut region. As development proceeds expression becomes restricted to the liver diverticulum and ultimately to the presumptive gallbladder, by tadpole stage 35. Also present in pronephros and the tip of the tail.

It is found in the apical cell membrane. It carries out the reaction (S)-lactate(out) + 2 Na(+)(out) = (S)-lactate(in) + 2 Na(+)(in). The enzyme catalyses propanoate(out) + 2 Na(+)(out) = propanoate(in) + 2 Na(+)(in). It catalyses the reaction pyruvate(out) + 2 Na(+)(out) = pyruvate(in) + 2 Na(+)(in). The catalysed reaction is acetate(out) + 2 Na(+)(out) = acetate(in) + 2 Na(+)(in). It carries out the reaction butanoate(out) + 2 Na(+)(out) = butanoate(in) + 2 Na(+)(in). The enzyme catalyses nicotinate(out) + 2 Na(+)(out) = nicotinate(in) + 2 Na(+)(in). It catalyses the reaction (R)-3-hydroxybutanoate(out) + 2 Na(+)(out) = (R)-3-hydroxybutanoate(in) + 2 Na(+)(in). The catalysed reaction is acetoacetate(out) + 2 Na(+)(out) = acetoacetate(in) + 2 Na(+)(in). It carries out the reaction 4-methyl-2-oxopentanoate(out) + 2 Na(+)(out) = 4-methyl-2-oxopentanoate(in) + 2 Na(+)(in). The enzyme catalyses 5-oxo-L-proline(out) + 2 Na(+)(out) = 5-oxo-L-proline(in) + 2 Na(+)(in). It catalyses the reaction iodide(out) = iodide(in). The catalysed reaction is chloride(in) = chloride(out). It carries out the reaction nitrate(in) = nitrate(out). The enzyme catalyses bromide(in) = bromide(out). Functionally, acts as an electrogenic sodium (Na(+)) and chloride (Cl-)-dependent sodium-coupled solute transporter, including transport of monocarboxylates (short-chain fatty acids including L-lactate, D-lactate, pyruvate, acetate, propionate, valerate and butyrate), mocarboxylate drugs (nicotinate, benzoate, salicylate and 5-aminosalicylate) and ketone bodies (beta-D-hydroxybutyrate, acetoacetate and alpha-ketoisocaproate), with a Na(+):substrate stoichiometry of between 4:1 and 2:1. Catalyzes passive carrier mediated diffusion of iodide. Mediates iodide transport from the thyrocyte into the colloid lumen through the apical membrane. Mediates sodium-coupled electrogenic transport of pyroglutamate (5-oxo-L-proline). Can mediate the transport of chloride, bromide, iodide and nitrate ions when external concentration of sodium ions is reduced. The protein is Sodium-coupled monocarboxylate transporter 1 of Xenopus laevis (African clawed frog).